The sequence spans 184 residues: Mediator of RNA polymerase II transcription subunit 28 (184 aa).

Residues 77 to 105 (LLKEENFDLKQEIARKDELIRKHYEKIES) adopt a coiled-coil conformation.

Belongs to the Mediator complex subunit 28 family. Component of the Mediator complex.

Its subcellular location is the nucleus. In terms of biological role, component of the Mediator complex, a coactivator involved in the regulated transcription of nearly all RNA polymerase II-dependent genes. Mediator functions as a bridge to convey information from gene-specific regulatory proteins to the basal RNA polymerase II transcription machinery. Mediator is recruited to promoters by direct interactions with regulatory proteins and serves as a scaffold for the assembly of a functional preinitiation complex with RNA polymerase II and the general transcription factors. This is Mediator of RNA polymerase II transcription subunit 28 (MED28) from Aedes aegypti (Yellowfever mosquito).